Consider the following 296-residue polypeptide: Light-independent protochlorophyllide reductase iron-sulfur ATP-binding protein (296 aa).

ATP-binding positions include 39–44 (GIGKST) and Lys-68. Ser-43 is a binding site for Mg(2+). The [4Fe-4S] cluster site is built by Cys-124 and Cys-158. 209-210 (NR) is a binding site for ATP.

This sequence belongs to the NifH/BchL/ChlL family. As to quaternary structure, homodimer. Protochlorophyllide reductase is composed of three subunits; ChlL, ChlN and ChlB. The cofactor is [4Fe-4S] cluster.

The catalysed reaction is chlorophyllide a + oxidized 2[4Fe-4S]-[ferredoxin] + 2 ADP + 2 phosphate = protochlorophyllide a + reduced 2[4Fe-4S]-[ferredoxin] + 2 ATP + 2 H2O. The protein operates within porphyrin-containing compound metabolism; chlorophyll biosynthesis (light-independent). In terms of biological role, component of the dark-operative protochlorophyllide reductase (DPOR) that uses Mg-ATP and reduced ferredoxin to reduce ring D of protochlorophyllide (Pchlide) to form chlorophyllide a (Chlide). This reaction is light-independent. The L component serves as a unique electron donor to the NB-component of the complex, and binds Mg-ATP. The protein is Light-independent protochlorophyllide reductase iron-sulfur ATP-binding protein of Synechococcus sp. (strain WH7803).